We begin with the raw amino-acid sequence, 502 residues long: Glycerol kinase (502 aa).

Thr14 is a binding site for ADP. ATP contacts are provided by Thr14, Thr15, and Ser16. Thr14 contributes to the sn-glycerol 3-phosphate binding site. Arg18 contacts ADP. The sn-glycerol 3-phosphate site is built by Arg84, Glu85, and Tyr136. Residues Arg84, Glu85, and Tyr136 each coordinate glycerol. His232 is modified (phosphohistidine; by HPr). Residue Asp246 coordinates sn-glycerol 3-phosphate. Positions 246 and 247 each coordinate glycerol. ADP contacts are provided by Thr268 and Gly311. Residues Thr268, Gly311, Gln315, and Gly412 each contribute to the ATP site. The ADP site is built by Gly412 and Asn416.

Belongs to the FGGY kinase family. In terms of assembly, homotetramer and homodimer (in equilibrium). The phosphoenolpyruvate-dependent sugar phosphotransferase system (PTS), including enzyme I, and histidine-containing protein (HPr) are required for the phosphorylation, which leads to the activation of the enzyme.

It carries out the reaction glycerol + ATP = sn-glycerol 3-phosphate + ADP + H(+). Its pathway is polyol metabolism; glycerol degradation via glycerol kinase pathway; sn-glycerol 3-phosphate from glycerol: step 1/1. Activated by phosphorylation and inhibited by fructose 1,6-bisphosphate (FBP). In terms of biological role, key enzyme in the regulation of glycerol uptake and metabolism. Catalyzes the phosphorylation of glycerol to yield sn-glycerol 3-phosphate. The polypeptide is Glycerol kinase (Streptococcus pneumoniae (strain ATCC 700669 / Spain 23F-1)).